We begin with the raw amino-acid sequence, 62 residues long: Short neurotoxin A (62 aa).

Polar residues predominate over residues 1–16 (RRCFNHPSSQPQTNKS). A disordered region spans residues 1–21 (RRCFNHPSSQPQTNKSCPPGE). Disulfide bonds link C3–C24, C17–C41, C43–C54, and C55–C60.

The protein belongs to the three-finger toxin family. Short-chain subfamily. Type I alpha-neurotoxin sub-subfamily. Expressed by the venom gland.

Its subcellular location is the secreted. Binds to muscle nicotinic acetylcholine receptor (nAChR) and inhibit acetylcholine from binding to the receptor, thereby impairing neuromuscular transmission. This chain is Short neurotoxin A, found in Laticauda crockeri (Crocker's sea snake).